An 808-amino-acid chain; its full sequence is Anaphase-promoting complex subunit 4 (808 aa).

Tyr-469 carries the post-translational modification Phosphotyrosine. Ser-757 and Ser-758 each carry phosphoserine. Lys-772 is covalently cross-linked (Glycyl lysine isopeptide (Lys-Gly) (interchain with G-Cter in SUMO2)). Ser-777 and Ser-779 each carry phosphoserine. Lys-798 participates in a covalent cross-link: Glycyl lysine isopeptide (Lys-Gly) (interchain with G-Cter in SUMO2).

Belongs to the APC4 family. The mammalian APC/C is composed at least of 14 distinct subunits ANAPC1, ANAPC2, CDC27/APC3, ANAPC4, ANAPC5, CDC16/APC6, ANAPC7, CDC23/APC8, ANAPC10, ANAPC11, CDC26/APC12, ANAPC13, ANAPC15 and ANAPC16 that assemble into a complex of at least 19 chains with a combined molecular mass of around 1.2 MDa; APC/C interacts with FZR1 and FBXO5. In the context of the APC/C complex, directly interacts with UBE2S. Interacts with FBXO43.

The protein localises to the nucleus. It participates in protein modification; protein ubiquitination. Its function is as follows. Component of the anaphase promoting complex/cyclosome (APC/C), a cell cycle-regulated E3 ubiquitin ligase that controls progression through mitosis and the G1 phase of the cell cycle. The APC/C complex acts by mediating ubiquitination and subsequent degradation of target proteins: it mainly mediates the formation of 'Lys-11'-linked polyubiquitin chains and, to a lower extent, the formation of 'Lys-48'- and 'Lys-63'-linked polyubiquitin chains. The APC/C complex catalyzes assembly of branched 'Lys-11'-/'Lys-48'-linked branched ubiquitin chains on target proteins. In Homo sapiens (Human), this protein is Anaphase-promoting complex subunit 4 (ANAPC4).